A 395-amino-acid polypeptide reads, in one-letter code: Nitrite extrusion protein (395 aa).

12 helical membrane-spanning segments follow: residues 15-35 (SLVAGFMVWVLISSLISQITL), 44-64 (ISLVTAIPVILGSLLRIPLGY), 73-93 (LMFMVSFILLLFPVFWISIAD), 96-116 (FDLIAGGFFLGIGGAVFSIGV), 133-153 (GIYGAGNIGTAVTTFAAPVIA), 160-180 (STVQMYLILLAVFALLHVLFG), 203-223 (VLWFLSLFYFITFGAFVAFTI), 240-262 (AGLRTAGFIAVSTLLRPAGGFLA), 271-291 (LMFVFAGLTLSGIILSFSPTI), 293-313 (LYTFGSLTVAVCSGIGNGTVF), 330-350 (IVSAMGGLGGFFPPLILASVF), and 357-377 (AIGFMALSEVALASFVLVIWM).

The protein belongs to the major facilitator superfamily. Nitrate/nitrite porter (TC 2.A.1.8) family.

Its subcellular location is the cell membrane. Functionally, involved in excretion of nitrite produced by the dissimilatory reduction of nitrate. The chain is Nitrite extrusion protein (narK) from Bacillus subtilis (strain 168).